Here is a 341-residue protein sequence, read N- to C-terminus: L-threonine 3-dehydrogenase (341 aa).

Cys38 serves as a coordination point for Zn(2+). Catalysis depends on charge relay system residues Thr40 and His43. Positions 63, 64, 93, 96, 99, and 107 each coordinate Zn(2+). NAD(+) is bound by residues Ile175, Asp195, Arg200, 262-264 (LGI), and 286-287 (IY).

This sequence belongs to the zinc-containing alcohol dehydrogenase family. As to quaternary structure, homotetramer. The cofactor is Zn(2+).

Its subcellular location is the cytoplasm. It carries out the reaction L-threonine + NAD(+) = (2S)-2-amino-3-oxobutanoate + NADH + H(+). It participates in amino-acid degradation; L-threonine degradation via oxydo-reductase pathway; glycine from L-threonine: step 1/2. Its function is as follows. Catalyzes the NAD(+)-dependent oxidation of L-threonine to 2-amino-3-ketobutyrate. This is L-threonine 3-dehydrogenase from Enterobacter sp. (strain 638).